Reading from the N-terminus, the 57-residue chain is uncharacterized protein (57 aa).

The next 2 helical transmembrane spans lie at 2 to 22 (LLVV…LRSV) and 29 to 49 (GFLL…MTVI).

Its subcellular location is the cell membrane. This is an uncharacterized protein from Bacillus subtilis (strain 168).